Consider the following 559-residue polypeptide: Dihydroxy-acid dehydratase 2 (559 aa).

C53 is a [2Fe-2S] cluster binding site. Residue D85 participates in Mg(2+) binding. A [2Fe-2S] cluster-binding site is contributed by C126. Mg(2+)-binding residues include D127 and K128. K128 bears the N6-carboxylysine mark. C195 provides a ligand contact to [2Fe-2S] cluster. Residue E446 coordinates Mg(2+). Residue S472 is the Proton acceptor of the active site.

It belongs to the IlvD/Edd family. In terms of assembly, homodimer. The cofactor is [2Fe-2S] cluster. Requires Mg(2+) as cofactor.

The enzyme catalyses (2R)-2,3-dihydroxy-3-methylbutanoate = 3-methyl-2-oxobutanoate + H2O. It carries out the reaction (2R,3R)-2,3-dihydroxy-3-methylpentanoate = (S)-3-methyl-2-oxopentanoate + H2O. It functions in the pathway amino-acid biosynthesis; L-isoleucine biosynthesis; L-isoleucine from 2-oxobutanoate: step 3/4. It participates in amino-acid biosynthesis; L-valine biosynthesis; L-valine from pyruvate: step 3/4. Functionally, functions in the biosynthesis of branched-chain amino acids. Catalyzes the dehydration of (2R,3R)-2,3-dihydroxy-3-methylpentanoate (2,3-dihydroxy-3-methylvalerate) into 2-oxo-3-methylpentanoate (2-oxo-3-methylvalerate) and of (2R)-2,3-dihydroxy-3-methylbutanoate (2,3-dihydroxyisovalerate) into 2-oxo-3-methylbutanoate (2-oxoisovalerate), the penultimate precursor to L-isoleucine and L-valine, respectively. The chain is Dihydroxy-acid dehydratase 2 from Pseudoalteromonas translucida (strain TAC 125).